The following is a 221-amino-acid chain: PKHD-type hydroxylase P9515_13321 (221 aa).

The Fe2OG dioxygenase domain occupies 80–174; the sequence is TIHGIMFTKS…RLVCVGWIES (95 aa). 3 residues coordinate Fe cation: H98, D100, and H155. R165 contacts 2-oxoglutarate.

It depends on Fe(2+) as a cofactor. L-ascorbate serves as cofactor.

This Prochlorococcus marinus (strain MIT 9515) protein is PKHD-type hydroxylase P9515_13321.